A 264-amino-acid chain; its full sequence is Thiazole synthase (264 aa).

The active-site Schiff-base intermediate with DXP is the Lys101. Residues Gly162, 188-189, and 210-211 contribute to the 1-deoxy-D-xylulose 5-phosphate site; these read AG and NT.

This sequence belongs to the ThiG family. Homotetramer. Forms heterodimers with either ThiH or ThiS.

The protein localises to the cytoplasm. The enzyme catalyses [ThiS sulfur-carrier protein]-C-terminal-Gly-aminoethanethioate + 2-iminoacetate + 1-deoxy-D-xylulose 5-phosphate = [ThiS sulfur-carrier protein]-C-terminal Gly-Gly + 2-[(2R,5Z)-2-carboxy-4-methylthiazol-5(2H)-ylidene]ethyl phosphate + 2 H2O + H(+). The protein operates within cofactor biosynthesis; thiamine diphosphate biosynthesis. Its function is as follows. Catalyzes the rearrangement of 1-deoxy-D-xylulose 5-phosphate (DXP) to produce the thiazole phosphate moiety of thiamine. Sulfur is provided by the thiocarboxylate moiety of the carrier protein ThiS. In vitro, sulfur can be provided by H(2)S. This Chromobacterium violaceum (strain ATCC 12472 / DSM 30191 / JCM 1249 / CCUG 213 / NBRC 12614 / NCIMB 9131 / NCTC 9757 / MK) protein is Thiazole synthase.